Reading from the N-terminus, the 438-residue chain is Death-associated inhibitor of apoptosis 1 (438 aa).

The stretch at 44 to 110 (EETRLKTFTD…QRWSPNCPLL (67 aa)) is one BIR 1 repeat. The disordered stretch occupies residues 194 to 213 (TATQATGDVQPETCRPSAAS). Residues 226-293 (ETARLRTFEA…ALWLSQCRFV (68 aa)) form a BIR 2 repeat. Zn(2+)-binding residues include Cys-263, Cys-266, His-283, and Cys-290. Positions 322 to 346 (GGVAVASTQASEEEQQTSLSSEEAV) are disordered. The span at 327–345 (ASTQASEEEQQTSLSSEEA) shows a compositional bias: low complexity. The RING-type zinc-finger motif lies at 391–426 (CKICYGAEYNTAFLPCGHVVACAKCASSVTKCPLCR).

It belongs to the IAP family. As to quaternary structure, interacts (via BIR 2 domain) with Dronc (via residues 114-125). Rpr, hid and grim can outcompete Dronc for binding Diap1 therefore removing Diap1-mediated ubiquitination. Interacts (via BIR 2 domain) with HtrA2; this displaces any bound Dronc. Interacts with Strica. The N-terminally cleaved form interacts with Ubr3 (via UBR-type zinc finger); the interaction promotes the recruitment and uniquitination of substrate capases such as Dronc. Ubiquitinated and degraded by HtrA2 in apoptotic cells; proteolytic cleavage at specific sites in the BIR domain linker region generating inactive fragments. Mutation of one site reduces but does not abolish cleavage as another site is selected by the protease.

The enzyme catalyses S-ubiquitinyl-[E2 ubiquitin-conjugating enzyme]-L-cysteine + [acceptor protein]-L-lysine = [E2 ubiquitin-conjugating enzyme]-L-cysteine + N(6)-ubiquitinyl-[acceptor protein]-L-lysine.. Functionally, anti-apoptotic protein which functions as a caspase regulator, using its E3 ubiquitin-protein ligase activity to smother caspase activity. Binds, ubiquitinates and inactivates initiator caspase Dronc, and effector caspases Drice and Dcp-1. Acts as a Nedd8-E3 ubiquitin-protein ligase for Drice. Suppresses apoptosis by targeting the apoptosome for ubiquitination and inactivation. Plays an important role in cell motility. Overexpression suppresses rpr and hid-dependent cell death in the eye. Interaction of Diap1 with Dronc is required to suppress Dronc-mediated cell death through Diap1-mediated ubiquitination of Dronc. Acts as a positive regulator of Wnt signaling. In Drosophila melanogaster (Fruit fly), this protein is Death-associated inhibitor of apoptosis 1 (Diap1).